Reading from the N-terminus, the 368-residue chain is 3-dehydroquinate synthase (368 aa).

NAD(+) is bound by residues 112 to 116 (GVIGD), 136 to 137 (TT), K149, and K158. E191, H256, and H273 together coordinate Zn(2+).

It belongs to the sugar phosphate cyclases superfamily. Dehydroquinate synthase family. It depends on Co(2+) as a cofactor. The cofactor is Zn(2+). NAD(+) is required as a cofactor.

Its subcellular location is the cytoplasm. The enzyme catalyses 7-phospho-2-dehydro-3-deoxy-D-arabino-heptonate = 3-dehydroquinate + phosphate. It functions in the pathway metabolic intermediate biosynthesis; chorismate biosynthesis; chorismate from D-erythrose 4-phosphate and phosphoenolpyruvate: step 2/7. In terms of biological role, catalyzes the conversion of 3-deoxy-D-arabino-heptulosonate 7-phosphate (DAHP) to dehydroquinate (DHQ). The polypeptide is 3-dehydroquinate synthase (Prochlorococcus marinus (strain NATL1A)).